The chain runs to 378 residues: Odorant receptor 45a (378 aa).

The Cytoplasmic portion of the chain corresponds to 1–30 (MDASYFAVQRRALEIVGFDPSTPQLSLKHP). Residues 31–51 (IWAGILILSLISHNWPMVVYA) form a helical membrane-spanning segment. Residues 52 to 129 (LQDLSDLTRL…RYVARSFRNA (78 aa)) are Extracellular-facing. Residues 130-150 (AYGVICASAIAPMLLGLWGYV) form a helical membrane-spanning segment. Topologically, residues 151–173 (ETGVFTPTTPMEFNFWLDERKPH) are cytoplasmic. The helical transmembrane segment at 174-194 (FYWPIYVWGVLGVAAAAWLAI) threads the bilayer. The Extracellular portion of the chain corresponds to 195-197 (ATD). A helical transmembrane segment spans residues 198–218 (TLFSWLTHNVVIQFQLLELVL). Over 219–249 (EEKDLNGGDSRLTGFVSRHRIALDLAKELSS) the chain is Cytoplasmic. Residues 250 to 270 (IFGEIVFVKYMLSYLQLCMLA) traverse the membrane as a helical segment. At 271 to 285 (FRFSRSGWSAQVPFR) the chain is on the extracellular side. Residues 286–306 (ATFLVAIIIQLSSYCYGGEYI) traverse the membrane as a helical segment. The Cytoplasmic portion of the chain corresponds to 307 to 342 (KQQSLAIAQAVYGQINWPEMTPKKRRLWQMVIMRAQ). The chain crosses the membrane as a helical span at residues 343–363 (RPAKIFGFMFVVDLPLLLWVI). The Extracellular segment spans residues 364-378 (RTAGSFLAMLRTFER).

It belongs to the insect chemoreceptor superfamily. Heteromeric odorant receptor channel (TC 1.A.69) family. Or1a subfamily. Interacts with Orco. Complexes exist early in the endomembrane system in olfactory sensory neurons (OSNs), coupling these complexes to the conserved ciliary trafficking pathway.

The protein localises to the cell membrane. In terms of biological role, odorant receptor which mediates acceptance or avoidance behavior, depending on its substrates. The odorant receptor repertoire encodes a large collection of odor stimuli that vary widely in identity, intensity, and duration. May form a complex with Orco to form odorant-sensing units, providing sensitive and prolonged odorant signaling and calcium permeability. Involved in the behavioral responses to hexanol, pentyl acetate, benzyl acetate, and 2-heptanone. In Drosophila melanogaster (Fruit fly), this protein is Odorant receptor 45a (Or45a).